The chain runs to 159 residues: MKRIVRISFTDMEATDSSSSEDESPPSSRRRGKKLVKEIVIDHSDPPEVGKTRFKIRIPASLLAARNTTANKKKFRGVRQRPWGKWAAEIRCGRVKGRPERIWLGTFETAEEAALAYDNAAIQLIGPDAPTNFGRPDVDSAVVKKQDSDASGGASEEVV.

Disordered stretches follow at residues 1–36 and 128–159; these read MKRI…KKLV and DAPT…EEVV. The AP2/ERF DNA-binding region spans 74–134; the sequence is KFRGVRQRPW…IGPDAPTNFG (61 aa). The span at 136-148 shows a compositional bias: basic and acidic residues; that stretch reads PDVDSAVVKKQDS.

The protein belongs to the AP2/ERF transcription factor family. ERF subfamily.

The protein localises to the nucleus. In terms of biological role, probably acts as a transcriptional activator. Binds to the GCC-box pathogenesis-related promoter element. May be involved in the regulation of gene expression by stress factors and by components of stress signal transduction pathways. This Arabidopsis thaliana (Mouse-ear cress) protein is Ethylene-responsive transcription factor ERF069 (ERF069).